Reading from the N-terminus, the 153-residue chain is Pheromone-binding protein Gp-9 (153 aa).

Positions 1–19 are cleaved as a signal peptide; it reads MKTFVLHIFIFALVAFASA. 3 cysteine pairs are disulfide-bonded: cysteine 37–cysteine 77, cysteine 73–cysteine 129, and cysteine 118–cysteine 138.

This sequence belongs to the PBP/GOBP family. In terms of assembly, homodimer.

It is found in the secreted. Functionally, colony queen number, a major feature of social organization, is associated with worker genotype for Gp-9. Colonies are headed by either a single reproductive queen (monogyne form) or multiple queens (polygyne form). Differences in worker Gp-9 genotypes between social forms may cause differences in workers' abilities to recognize queens and regulate their numbers. This Solenopsis substituta (Fire ant) protein is Pheromone-binding protein Gp-9.